We begin with the raw amino-acid sequence, 403 residues long: Phosphopentomutase (403 aa).

Mn(2+)-binding residues include D13, D298, H303, D339, H340, and H351.

Belongs to the phosphopentomutase family. Mn(2+) is required as a cofactor.

It is found in the cytoplasm. The catalysed reaction is 2-deoxy-alpha-D-ribose 1-phosphate = 2-deoxy-D-ribose 5-phosphate. It carries out the reaction alpha-D-ribose 1-phosphate = D-ribose 5-phosphate. The protein operates within carbohydrate degradation; 2-deoxy-D-ribose 1-phosphate degradation; D-glyceraldehyde 3-phosphate and acetaldehyde from 2-deoxy-alpha-D-ribose 1-phosphate: step 1/2. In terms of biological role, isomerase that catalyzes the conversion of deoxy-ribose 1-phosphate (dRib-1-P) and ribose 1-phosphate (Rib-1-P) to deoxy-ribose 5-phosphate (dRib-5-P) and ribose 5-phosphate (Rib-5-P), respectively. The polypeptide is Phosphopentomutase (Streptococcus thermophilus (strain ATCC BAA-491 / LMD-9)).